A 221-amino-acid chain; its full sequence is Early nodulin-like protein 4 (221 aa).

Positions 1 to 21 (MVFVKMTDVYLMIVMLMGLGF) are cleaved as a signal peptide. In terms of domain architecture, Phytocyanin spans 29–130 (HKFYVGGRDG…GQKLAVTVMS (102 aa)). Residues N59 and N85 are each glycosylated (N-linked (GlcNAc...) asparagine). C84 and C118 are oxidised to a cystine. The interval 130–185 (STGHHSHTPRHPSPSPSPSASPVRKALLSPAPIPVHKALSSPAPTPGVDPSHSEVL) is disordered. The GPI-anchor amidated asparagine moiety is linked to residue N197. A propeptide spans 198 to 221 (LAGSVAPGVISLGLVLVIMISSMV) (removed in mature form).

Belongs to the early nodulin-like (ENODL) family. In terms of tissue distribution, confined to flowers.

It is found in the cell membrane. Its function is as follows. May act as a carbohydrate transporter. The sequence is that of Early nodulin-like protein 4 from Arabidopsis thaliana (Mouse-ear cress).